We begin with the raw amino-acid sequence, 544 residues long: MATNYIFVTGGVVSSLGKGIAAASLASILEARGLDVTIMKLDPYINVDPGTMSPTQHGEVFVTQDGAETDLDLGHYERFIRTKMTKANNFTSGKIYSEVLRKERRGDYLGATIQVIPHITNEIKARVIEGGKGHDVAIVEVGGTVGDIESLPFLEALRQLAVDVGREKTLFMHLTLVPYIPTAGEVKTKPTQHSVKELLSIGIQPDVLICRSDRMIPANERAKIALFCNVPERAVISLKDVDSIYRIPALLKSQGLDDFVCDRFRLTCKEADLSEWEQVLYQQANPTGEVTIGMVGKYVELPDAYKSVNEALKHAGLKNRLTVNVKYIDSQDVETKGVEVLQGVDAILVPGGFGYRGVEGKIRTAQYARENKIPYLGICLGMQIALIEYARNVAGLTQANSSEFDKHCPQPVVGLITEWQDESGNVETRSDESDLGGTMRLGAQQCHLIEGTKAREVYGTETIVERHRHRYEVNNTLLPQIEAAGLKVSGLSADRKLVEIIEVPNHPWFIAAQFHPEFTSTPRDGHPLFEGFVKAAKEHQGKNA.

The interval 1 to 266 (MATNYIFVTG…DDFVCDRFRL (266 aa)) is amidoligase domain. Ser-14 contributes to the CTP binding site. A UTP-binding site is contributed by Ser-14. ATP-binding positions include 15 to 20 (SLGKGI) and Asp-72. Positions 72 and 140 each coordinate Mg(2+). CTP-binding positions include 147–149 (DIE), 187–192 (KTKPTQ), and Lys-223. Residues 187–192 (KTKPTQ) and Lys-223 contribute to the UTP site. 239 to 241 (KDV) contacts ATP. The 252-residue stretch at 291 to 542 (TIGMVGKYVE…VKAAKEHQGK (252 aa)) folds into the Glutamine amidotransferase type-1 domain. Gly-352 serves as a coordination point for L-glutamine. Cys-379 acts as the Nucleophile; for glutamine hydrolysis in catalysis. Residues 380–383 (LGMQ), Glu-403, and Arg-470 contribute to the L-glutamine site. Catalysis depends on residues His-515 and Glu-517.

The protein belongs to the CTP synthase family. In terms of assembly, homotetramer.

The catalysed reaction is UTP + L-glutamine + ATP + H2O = CTP + L-glutamate + ADP + phosphate + 2 H(+). It carries out the reaction L-glutamine + H2O = L-glutamate + NH4(+). The enzyme catalyses UTP + NH4(+) + ATP = CTP + ADP + phosphate + 2 H(+). It participates in pyrimidine metabolism; CTP biosynthesis via de novo pathway; CTP from UDP: step 2/2. Its activity is regulated as follows. Allosterically activated by GTP, when glutamine is the substrate; GTP has no effect on the reaction when ammonia is the substrate. The allosteric effector GTP functions by stabilizing the protein conformation that binds the tetrahedral intermediate(s) formed during glutamine hydrolysis. Inhibited by the product CTP, via allosteric rather than competitive inhibition. Catalyzes the ATP-dependent amination of UTP to CTP with either L-glutamine or ammonia as the source of nitrogen. Regulates intracellular CTP levels through interactions with the four ribonucleotide triphosphates. The polypeptide is CTP synthase (Glaesserella parasuis serovar 5 (strain SH0165) (Haemophilus parasuis)).